The following is a 688-amino-acid chain: Polyribonucleotide nucleotidyltransferase (688 aa).

Mg(2+) contacts are provided by aspartate 484 and aspartate 490. The KH domain maps to 550–609 (PTTEIFNVAPDKIVEIIGQGGRVIKEIVEKFEVKIDLNKPSGEVKIMGNKERVLKTKEFI). Residues 626–688 (DEVLEAQVKR…NKGKIALDLA (63 aa)) enclose the S1 motif domain.

Belongs to the polyribonucleotide nucleotidyltransferase family. Requires Mg(2+) as cofactor.

Its subcellular location is the cytoplasm. It catalyses the reaction RNA(n+1) + phosphate = RNA(n) + a ribonucleoside 5'-diphosphate. Involved in mRNA degradation. Catalyzes the phosphorolysis of single-stranded polyribonucleotides processively in the 3'- to 5'-direction. This chain is Polyribonucleotide nucleotidyltransferase, found in Helicobacter pylori (strain ATCC 700392 / 26695) (Campylobacter pylori).